The following is a 513-amino-acid chain: Mesoderm induction early response protein 1 (513 aa).

Low complexity predominate over residues 1 to 16 (MAEPSVESSSPGGSAT). Positions 1–174 (MAEPSVESSS…EEESEEDEDY (174 aa)) are disordered. 2 stretches are compositionally biased toward basic and acidic residues: residues 17–36 (SDDH…FDDE) and 46–63 (EGER…RESD). Residues 82 to 107 (QEDDDDEDEEEEEEEGEDDDDVDNDD) show a composition bias toward acidic residues. A compositionally biased stretch (polar residues) spans 131 to 146 (QSSNDDPAPSVASQDP). Residues 157-261 (YFDTNSEIEE…IKDNEQALYE (105 aa)) are interaction with HDAC1. Residues 162 to 174 (SEIEEESEEDEDY) show a composition bias toward acidic residues. Positions 182–280 (KEIMVGSMFQ…ESLRRLRFNV (99 aa)) constitute an ELM2 domain. Residues 285–337 (EELSVWTEEECRNFEQGLKVYGKDFHVIQANKVRTRSVGECVAFYYMWKKSER) form the SANT domain. The interval 368–513 (ESESAASSRA…KLEELETLDD (146 aa)) is disordered. 2 stretches are compositionally biased toward basic and acidic residues: residues 416-425 (PSKDEAKPEG) and 463-476 (SRSE…NERP). A compositionally biased stretch (polar residues) spans 483–500 (NSNGKESPGSSEFFQEAN).

It is found in the nucleus. In terms of biological role, transcriptional repressor regulating the expression of a number of genes. Probably functions through recruitment of histone deacetylases involved in chromatin silencing. This Gallus gallus (Chicken) protein is Mesoderm induction early response protein 1 (MIER1).